The chain runs to 141 residues: Hemoglobin subunit alpha-2 (141 aa).

One can recognise a Globin domain in the interval V1–R141. H58 provides a ligand contact to O2. H87 contacts heme b.

Belongs to the globin family. In terms of assembly, the major hemoglobin component (HbIII) is a heterotetramer of two alpha-2 chains and two beta-1 chains. Red blood cells.

Involved in oxygen transport from the lung to the various peripheral tissues. In Varanus albigularis (White-throated monitor), this protein is Hemoglobin subunit alpha-2.